A 244-amino-acid chain; its full sequence is Capsid protein (244 aa).

The Bipartite nuclear localization signal signature appears at 1–24 (MSTSKRKRADEAQWNKRSTKKKGS). The disordered stretch occupies residues 1-39 (MSTSKRKRADEAQWNKRSTKKKGSAPQAKKPGGKGERPS).

This sequence belongs to the geminiviridae capsid protein family. In terms of assembly, homomultimer. Interacts with the movement protein. Binds to single-stranded and double-stranded viral DNA.

The protein resides in the virion. The protein localises to the host nucleus. Functionally, encapsidates the viral genome into characteristic twinned ('geminate') particles. Binds the genomic viral ssDNA and shuttles it into and out of the cell nucleus. Plays a role in protection of the genome from degradation, virus acquisition and transmission by insect vectors, infectivity, and systemic movement. The CP of monopartite geminiviruses is absolutely essential for virus movement. The protein is Capsid protein of Avena sativa (Oat).